A 295-amino-acid chain; its full sequence is Proline-rich protein 18 (295 aa).

The span at 1–13 (MPFPPMPPPPAPA) shows a compositional bias: pro residues. Residues 1 to 133 (MPFPPMPPPP…GAGPCPDSAA (133 aa)) form a disordered region. Positions 14–29 (PGAQAARQLPRRPCAA) are enriched in low complexity. The residue at position 47 (Ser-47) is a Phosphoserine. Residue Arg-83 is modified to Omega-N-methylarginine. Positions 103-126 (ARTTYAATSAGTGTTAAGTSSGAG) are enriched in low complexity. Arg-172 carries the asymmetric dimethylarginine modification. Residues 181–192 (ARAAGPRRGGPA) show a composition bias toward low complexity. The segment at 181–227 (ARAAGPRRGGPASDPDAPPTAGQGRRAPPPGAQLLHGGLQVPQLSPR) is disordered. Arg-188 carries the omega-N-methylarginine modification.

This is Proline-rich protein 18 (PRR18) from Homo sapiens (Human).